Here is a 387-residue protein sequence, read N- to C-terminus: Phosphoglycerate kinase (387 aa).

Residues 21-23 (DLN), R36, 59-62 (HLGR), R113, and R146 contribute to the substrate site. ATP-binding positions include K197, E314, and 340–343 (GGDT).

This sequence belongs to the phosphoglycerate kinase family. As to quaternary structure, monomer.

It localises to the cytoplasm. The catalysed reaction is (2R)-3-phosphoglycerate + ATP = (2R)-3-phospho-glyceroyl phosphate + ADP. It participates in carbohydrate degradation; glycolysis; pyruvate from D-glyceraldehyde 3-phosphate: step 2/5. The chain is Phosphoglycerate kinase from Pseudomonas savastanoi pv. phaseolicola (strain 1448A / Race 6) (Pseudomonas syringae pv. phaseolicola (strain 1448A / Race 6)).